Here is a 121-residue protein sequence, read N- to C-terminus: UPF0738 protein BLi01253/BL05110 (121 aa).

It belongs to the UPF0738 family.

This is UPF0738 protein BLi01253/BL05110 from Bacillus licheniformis (strain ATCC 14580 / DSM 13 / JCM 2505 / CCUG 7422 / NBRC 12200 / NCIMB 9375 / NCTC 10341 / NRRL NRS-1264 / Gibson 46).